Here is a 228-residue protein sequence, read N- to C-terminus: N-(5'-phosphoribosyl)anthranilate isomerase (228 aa).

It belongs to the TrpF family.

The catalysed reaction is N-(5-phospho-beta-D-ribosyl)anthranilate = 1-(2-carboxyphenylamino)-1-deoxy-D-ribulose 5-phosphate. It participates in amino-acid biosynthesis; L-tryptophan biosynthesis; L-tryptophan from chorismate: step 3/5. The sequence is that of N-(5'-phosphoribosyl)anthranilate isomerase from Azorhizobium caulinodans (strain ATCC 43989 / DSM 5975 / JCM 20966 / LMG 6465 / NBRC 14845 / NCIMB 13405 / ORS 571).